We begin with the raw amino-acid sequence, 147 residues long: VEWTDAERSAIIGLWGKLNPDELGPQALARCLIVYPWTQRYFATFGNLSSPAAIMGNPKVAAHGRTVMGGLERAIKNMDNIKATYAPLSVMHSEKLHVDPDNFRLLADCITVCAAMKFGPSGFNADVQEAWQKFLSVVVSALCRQYH.

Positions 2–147 constitute a Globin domain; it reads EWTDAERSAI…VVSALCRQYH (146 aa). Heme b-binding residues include His-63 and His-92.

This sequence belongs to the globin family. Heterotetramer of two alpha chains and two beta chains. Red blood cells.

In terms of biological role, involved in oxygen transport from gills to the various peripheral tissues. This chain is Hemoglobin subunit beta (hbb), found in Carassius auratus (Goldfish).